The following is a 495-amino-acid chain: Taxoid 2-alpha-hydroxylase (495 aa).

A helical membrane pass occupies residues 17–37; sequence LQSSAILLTVVSGIIVIVILL. Cysteine 441 contributes to the heme binding site.

This sequence belongs to the cytochrome P450 family.

The protein localises to the microsome membrane. The catalysed reaction is taxusin + reduced [NADPH--hemoprotein reductase] + O2 = 2alpha-hydroxytaxusin + oxidized [NADPH--hemoprotein reductase] + H2O + H(+). The enzyme catalyses 7beta-hydroxytaxusin + reduced [NADPH--hemoprotein reductase] + O2 = 2alpha,7beta-dihydroxytaxusin + oxidized [NADPH--hemoprotein reductase] + H2O + H(+). It functions in the pathway alkaloid biosynthesis; taxol biosynthesis. Functionally, catalyzes the conversion of taxusin to 2-alpha-hydroxytaxusin in taxol biosynthesis. Catalyzes the conversion of 7-beta-hydroxytaxusin to 2-alpha-7-beta-hydroxytaxusin in taxol biosynthesis. The sequence is that of Taxoid 2-alpha-hydroxylase from Taxus canadensis (Canadian yew).